We begin with the raw amino-acid sequence, 234 residues long: Peptidase E (234 aa).

Active-site charge relay system residues include S123, D138, and H160.

It belongs to the peptidase S51 family.

It localises to the cytoplasm. The enzyme catalyses Dipeptidase E catalyzes the hydrolysis of dipeptides Asp-|-Xaa. It does not act on peptides with N-terminal Glu, Asn or Gln, nor does it cleave isoaspartyl peptides.. In terms of biological role, hydrolyzes dipeptides containing N-terminal aspartate residues. May play a role in allowing the cell to use peptide aspartate to spare carbon otherwise required for the synthesis of the aspartate family of amino acids. This Actinobacillus pleuropneumoniae serotype 7 (strain AP76) protein is Peptidase E.